A 100-amino-acid polypeptide reads, in one-letter code: Aspartyl/glutamyl-tRNA(Asn/Gln) amidotransferase subunit C (100 aa).

Belongs to the GatC family. Heterotrimer of A, B and C subunits.

The catalysed reaction is L-glutamyl-tRNA(Gln) + L-glutamine + ATP + H2O = L-glutaminyl-tRNA(Gln) + L-glutamate + ADP + phosphate + H(+). The enzyme catalyses L-aspartyl-tRNA(Asn) + L-glutamine + ATP + H2O = L-asparaginyl-tRNA(Asn) + L-glutamate + ADP + phosphate + 2 H(+). Its function is as follows. Allows the formation of correctly charged Asn-tRNA(Asn) or Gln-tRNA(Gln) through the transamidation of misacylated Asp-tRNA(Asn) or Glu-tRNA(Gln) in organisms which lack either or both of asparaginyl-tRNA or glutaminyl-tRNA synthetases. The reaction takes place in the presence of glutamine and ATP through an activated phospho-Asp-tRNA(Asn) or phospho-Glu-tRNA(Gln). The chain is Aspartyl/glutamyl-tRNA(Asn/Gln) amidotransferase subunit C from Rickettsia peacockii (strain Rustic).